The primary structure comprises 296 residues: Putative S-adenosyl-L-methionine-dependent methyltransferase MAP_3881 (296 aa).

S-adenosyl-L-methionine-binding positions include Asp-121 and Asp-150–Leu-151.

This sequence belongs to the UPF0677 family.

Its function is as follows. Exhibits S-adenosyl-L-methionine-dependent methyltransferase activity. The chain is Putative S-adenosyl-L-methionine-dependent methyltransferase MAP_3881 from Mycolicibacterium paratuberculosis (strain ATCC BAA-968 / K-10) (Mycobacterium paratuberculosis).